Reading from the N-terminus, the 410-residue chain is Histidine--tRNA ligase (410 aa).

Belongs to the class-II aminoacyl-tRNA synthetase family.

The protein resides in the cytoplasm. The enzyme catalyses tRNA(His) + L-histidine + ATP = L-histidyl-tRNA(His) + AMP + diphosphate + H(+). The sequence is that of Histidine--tRNA ligase from Methanoculleus marisnigri (strain ATCC 35101 / DSM 1498 / JR1).